Reading from the N-terminus, the 317-residue chain is UAP56-interacting factor (317 aa).

An N-acetylmethionine modification is found at M1. Residues 1-26 (MNRFGTRLVGATATPPPPPKARSNEN) form a disordered region. T14 bears the Phosphothreonine mark. Residue S23 is modified to Phosphoserine. Residues 26-44 (NLDKIDMSLDDIIKLNRKE) carry the UAP56-binding motif motif. Phosphoserine occurs at positions 60 and 117. K139 participates in a covalent cross-link: Glycyl lysine isopeptide (Lys-Gly) (interchain with G-Cter in SUMO1). Residue K260 forms a Glycyl lysine isopeptide (Lys-Gly) (interchain with G-Cter in SUMO2) linkage.

This sequence belongs to the UIF family. As to quaternary structure, interacts with DDX39B/UAP56 and NXF1; interaction with DDX39B/UAP56 and NXF1 are mutually exclusive. Interacts with SSRP1; required for its recruitment to mRNAs. Interacts with CHTOP.

It is found in the nucleus. Its subcellular location is the nucleoplasm. The protein resides in the nucleus speckle. Functionally, required for mRNA export from the nucleus to the cytoplasm. Acts as an adapter that uses the DDX39B/UAP56-NFX1 pathway to ensure efficient mRNA export and delivering to the nuclear pore. Associates with spliced and unspliced mRNAs simultaneously with ALYREF/THOC4. In Mus musculus (Mouse), this protein is UAP56-interacting factor (Fyttd1).